Reading from the N-terminus, the 307-residue chain is 4-hydroxy-3-methylbut-2-enyl diphosphate reductase (307 aa).

[4Fe-4S] cluster is bound at residue C13. (2E)-4-hydroxy-3-methylbut-2-enyl diphosphate is bound by residues H42 and H75. 2 residues coordinate dimethylallyl diphosphate: H42 and H75. Isopentenyl diphosphate is bound by residues H42 and H75. C97 contributes to the [4Fe-4S] cluster binding site. H125 lines the (2E)-4-hydroxy-3-methylbut-2-enyl diphosphate pocket. Residue H125 participates in dimethylallyl diphosphate binding. Residue H125 participates in isopentenyl diphosphate binding. The Proton donor role is filled by E127. T165 provides a ligand contact to (2E)-4-hydroxy-3-methylbut-2-enyl diphosphate. C195 lines the [4Fe-4S] cluster pocket. (2E)-4-hydroxy-3-methylbut-2-enyl diphosphate contacts are provided by S223, S224, N225, and S267. S223, S224, N225, and S267 together coordinate dimethylallyl diphosphate. 4 residues coordinate isopentenyl diphosphate: S223, S224, N225, and S267.

It belongs to the IspH family. Requires [4Fe-4S] cluster as cofactor.

The enzyme catalyses isopentenyl diphosphate + 2 oxidized [2Fe-2S]-[ferredoxin] + H2O = (2E)-4-hydroxy-3-methylbut-2-enyl diphosphate + 2 reduced [2Fe-2S]-[ferredoxin] + 2 H(+). It catalyses the reaction dimethylallyl diphosphate + 2 oxidized [2Fe-2S]-[ferredoxin] + H2O = (2E)-4-hydroxy-3-methylbut-2-enyl diphosphate + 2 reduced [2Fe-2S]-[ferredoxin] + 2 H(+). Its pathway is isoprenoid biosynthesis; dimethylallyl diphosphate biosynthesis; dimethylallyl diphosphate from (2E)-4-hydroxy-3-methylbutenyl diphosphate: step 1/1. The protein operates within isoprenoid biosynthesis; isopentenyl diphosphate biosynthesis via DXP pathway; isopentenyl diphosphate from 1-deoxy-D-xylulose 5-phosphate: step 6/6. Functionally, catalyzes the conversion of 1-hydroxy-2-methyl-2-(E)-butenyl 4-diphosphate (HMBPP) into a mixture of isopentenyl diphosphate (IPP) and dimethylallyl diphosphate (DMAPP). Acts in the terminal step of the DOXP/MEP pathway for isoprenoid precursor biosynthesis. The protein is 4-hydroxy-3-methylbut-2-enyl diphosphate reductase of Chlamydia trachomatis serovar L2b (strain UCH-1/proctitis).